A 735-amino-acid chain; its full sequence is MAGKCPMGFGTTNPMVRNGGTSNKDWWPNQLNLKILSQHSNKVNPLGSDFDYAKEFSKLDYDALKADLTALMTDSQDWWPADYGHYGPLFIRMAWHSAGTYRTGDGRGGASTGSQRLAPLNSWPDNANLDKARRLLWPIKQKYGNKISWADLMILAGNVALESMGLKTFGFSGGRVDVWEPEEDIYWGKEAQWLATSDKENSRYSGDRDLENPLAAVQMGLIYVNPEGPDGVPDPIKSGIDIRETFARMAMDDEETVALTAGGHTFGKCHGAGDAANVGAEPEAEGLVAQGLGWLSKFLSGKGDDTITSGIEGSWTANPTRWDNEYFDILLSYDWELTKSPAGAWQWIPKNPKEEHLAPAAHDKTKKVTTIMTTADMAMKMDPIYAKISKRFHENPQEFADAFARAWFKLTHRDLGPKSKYIGPEIPKEDLIWQDPIPPINYEIIDEKDIEILKEKLLSSSLGVSKLVSLAWASASTYRDSDKRGGANGARIALEPQRSWESNSYLNLDESLKILETIKGEFNSSNSNKKVSLADLIVLGGCAAVEKAAKDAGFNIKVPFTAGRADATQEQTHVESFSHLEPIADGFRNYSKAKYTLSTEELLIDKAQLLSLTIPEMIVLVGGMRVLGANYANSDLGVFTSNVGVLSNDFFVNLLDMKTAWYPTTQEEDSFVGKDRQSGSMKYSASRVDLLFGSNSQLRAVSEVYAQEDSKEKFVQDFINAWTKVMNLDRFDIKK.

The segment at residues 95–223 (WHSAGTYRTG…LAAVQMGLIY (129 aa)) is a cross-link (tryptophyl-tyrosyl-methioninium (Trp-Tyr) (with M-249)). Histidine 96 serves as the catalytic Proton acceptor. Residues 223–249 (YVNPEGPDGVPDPIKSGIDIRETFARM) constitute a cross-link (tryptophyl-tyrosyl-methioninium (Tyr-Met) (with W-95)). Histidine 264 is a binding site for heme b.

It belongs to the peroxidase family. Peroxidase/catalase subfamily. In terms of assembly, homodimer or homotetramer. It depends on heme b as a cofactor. Post-translationally, formation of the three residue Trp-Tyr-Met cross-link is important for the catalase, but not the peroxidase activity of the enzyme.

The catalysed reaction is H2O2 + AH2 = A + 2 H2O. It carries out the reaction 2 H2O2 = O2 + 2 H2O. Functionally, bifunctional enzyme with both catalase and broad-spectrum peroxidase activity. The chain is Catalase-peroxidase from Aliarcobacter butzleri (strain RM4018) (Arcobacter butzleri).